The following is an 87-amino-acid chain: Putative acyl-CoA-binding protein (87 aa).

The ACB domain maps to 1–86 (MSSTFEQAAA…VDELKTKYGM (86 aa)). An acyl-CoA is bound by residues Lys13, 28-32 (YALFK), Lys50, Lys54, and Tyr73.

The protein belongs to the ACBP family.

The protein localises to the cytoplasm. It localises to the nucleus. Its function is as follows. Binds medium- and long-chain acyl-CoA esters with very high affinity and may function as an intracellular carrier of acyl-CoA esters. May enhance the activity of the ceramide synthase complex. This chain is Putative acyl-CoA-binding protein, found in Schizosaccharomyces pombe (strain 972 / ATCC 24843) (Fission yeast).